The following is a 303-amino-acid chain: MFFMLETSICNIELRNPTILAAGVMGSMASSLNRIYRGGAGAVVTKSFSLRPNPGYRNPTTVEVTGGVINAIGLSNPGVEAFREELKLVDEEVPLIASVYGASPEEFASAAASVEEYADMIELNVSCPHAMAGCGASIGQDPELTFRVVSAVKDAVDVPISTKLTPNVTDIVEIAGSAEEAGSDALTLINSLGPGMKIDIKTARPILSNAFGGMSGPAIKPVAVRCVYDVYRSVDIPIMGVGGVRDFQDAVEFLFAGARAVQVGTAIMYDGPEVFMKICRGLEAFMMAEGFSSVDEMVGLAHD.

Residues Lys46, 70–74 (NAIGL), and Asn124 each bind substrate. FMN is bound at residue 46–47 (KS). Asn124 provides a ligand contact to FMN. Cys127 acts as the Nucleophile in catalysis. The FMN site is built by Lys163 and Ile189. 190 to 191 (NS) provides a ligand contact to substrate. Residues Gly216, 242 to 243 (GG), and 264 to 265 (GT) contribute to the FMN site.

The protein belongs to the dihydroorotate dehydrogenase family. Type 1 subfamily. In terms of assembly, heterotetramer of 2 PyrK and 2 PyrD type B subunits. FMN is required as a cofactor.

The protein localises to the cytoplasm. The catalysed reaction is (S)-dihydroorotate + NAD(+) = orotate + NADH + H(+). Its pathway is pyrimidine metabolism; UMP biosynthesis via de novo pathway; orotate from (S)-dihydroorotate (NAD(+) route): step 1/1. In terms of biological role, catalyzes the conversion of dihydroorotate to orotate with NAD(+) as electron acceptor. In Methanothermobacter thermautotrophicus (strain ATCC 29096 / DSM 1053 / JCM 10044 / NBRC 100330 / Delta H) (Methanobacterium thermoautotrophicum), this protein is Dihydroorotate dehydrogenase B (NAD(+)), catalytic subunit (pyrD).